A 241-amino-acid chain; its full sequence is Biosynthetic peptidoglycan transglycosylase (241 aa).

A helical transmembrane segment spans residues 19–39 (AILAVLGVWIAGILLFSVMPV).

This sequence belongs to the glycosyltransferase 51 family.

It is found in the cell inner membrane. It catalyses the reaction [GlcNAc-(1-&gt;4)-Mur2Ac(oyl-L-Ala-gamma-D-Glu-L-Lys-D-Ala-D-Ala)](n)-di-trans,octa-cis-undecaprenyl diphosphate + beta-D-GlcNAc-(1-&gt;4)-Mur2Ac(oyl-L-Ala-gamma-D-Glu-L-Lys-D-Ala-D-Ala)-di-trans,octa-cis-undecaprenyl diphosphate = [GlcNAc-(1-&gt;4)-Mur2Ac(oyl-L-Ala-gamma-D-Glu-L-Lys-D-Ala-D-Ala)](n+1)-di-trans,octa-cis-undecaprenyl diphosphate + di-trans,octa-cis-undecaprenyl diphosphate + H(+). The protein operates within cell wall biogenesis; peptidoglycan biosynthesis. Peptidoglycan polymerase that catalyzes glycan chain elongation from lipid-linked precursors. The polypeptide is Biosynthetic peptidoglycan transglycosylase (Cronobacter sakazakii (strain ATCC BAA-894) (Enterobacter sakazakii)).